Consider the following 387-residue polypeptide: MLHTTPSGLLIIDKPQGVTSFDAVAAVRGALHIKKVGHAGTLDPMATGTLVIAFGHATRLLNAIVAHDKTYEATIRLGLRTTTDDAEGEVLVDDEARSRWQTLSAQLTEGGQSGEPTALPTASWQDLLTRTIATNFTGDIEQVPNTFSAIKINGQRAYDLAREGKDVELKPRPVTISEFTVLDIRSGFVAGEQTAEPLREDANTGAIPALDVDVRISCSSGTYIRALARDLGKELGVGGYLTRLRRTRVGRFALPDDASGLIAPEAMLDTRTHTVTAHTDQKTFTNREGQTVTRNKCVLDTPEGLAGDERRNWLLDHALTMEQAARGAMPALDITPEEASELRFGRRIERTISEPTAAIVPQTHDVAAIIERANAHQAKPVTVFPLA.

Residue Asp43 is the Nucleophile of the active site.

This sequence belongs to the pseudouridine synthase TruB family. Type 1 subfamily.

It carries out the reaction uridine(55) in tRNA = pseudouridine(55) in tRNA. In terms of biological role, responsible for synthesis of pseudouridine from uracil-55 in the psi GC loop of transfer RNAs. The chain is tRNA pseudouridine synthase B from Bifidobacterium longum (strain DJO10A).